The following is a 442-amino-acid chain: Ribosomal protein uS12 methylthiotransferase RimO (442 aa).

Residues 5-117 enclose the MTTase N-terminal domain; it reads PSIGVVSLGC…VLDAIHAALP (113 aa). Residues C14, C50, C79, C148, C152, and C155 each coordinate [4Fe-4S] cluster. A Radical SAM core domain is found at 134–371; it reads LTPPHYAYLK…MAVQEAISRQ (238 aa). The region spanning 374-441 is the TRAM domain; that stretch reads QRRVGQRQRV…AHDLYGMVVS (68 aa).

It belongs to the methylthiotransferase family. RimO subfamily. It depends on [4Fe-4S] cluster as a cofactor.

The protein localises to the cytoplasm. The enzyme catalyses L-aspartate(89)-[ribosomal protein uS12]-hydrogen + (sulfur carrier)-SH + AH2 + 2 S-adenosyl-L-methionine = 3-methylsulfanyl-L-aspartate(89)-[ribosomal protein uS12]-hydrogen + (sulfur carrier)-H + 5'-deoxyadenosine + L-methionine + A + S-adenosyl-L-homocysteine + 2 H(+). Functionally, catalyzes the methylthiolation of an aspartic acid residue of ribosomal protein uS12. This Acidithiobacillus ferrooxidans (strain ATCC 53993 / BNL-5-31) (Leptospirillum ferrooxidans (ATCC 53993)) protein is Ribosomal protein uS12 methylthiotransferase RimO.